Consider the following 502-residue polypeptide: Glycerol kinase (502 aa).

Threonine 14 contacts ADP. Threonine 14, threonine 15, and serine 16 together coordinate ATP. Residue threonine 14 coordinates sn-glycerol 3-phosphate. Arginine 18 serves as a coordination point for ADP. Arginine 84, glutamate 85, tyrosine 136, and aspartate 246 together coordinate sn-glycerol 3-phosphate. Glycerol is bound by residues arginine 84, glutamate 85, tyrosine 136, aspartate 246, and glutamine 247. Positions 268 and 311 each coordinate ADP. ATP contacts are provided by threonine 268, glycine 311, glutamine 315, and glycine 412. ADP-binding residues include glycine 412 and asparagine 416.

Belongs to the FGGY kinase family.

The catalysed reaction is glycerol + ATP = sn-glycerol 3-phosphate + ADP + H(+). Its pathway is polyol metabolism; glycerol degradation via glycerol kinase pathway; sn-glycerol 3-phosphate from glycerol: step 1/1. With respect to regulation, inhibited by fructose 1,6-bisphosphate (FBP). Functionally, key enzyme in the regulation of glycerol uptake and metabolism. Catalyzes the phosphorylation of glycerol to yield sn-glycerol 3-phosphate. The sequence is that of Glycerol kinase from Pasteurella multocida (strain Pm70).